We begin with the raw amino-acid sequence, 69 residues long: Large ribosomal subunit protein uL29 (69 aa).

The protein belongs to the universal ribosomal protein uL29 family.

This chain is Large ribosomal subunit protein uL29 (rpmC), found in Lactococcus lactis subsp. lactis (strain IL1403) (Streptococcus lactis).